We begin with the raw amino-acid sequence, 438 residues long: DEAD-box ATP-dependent RNA helicase CshB (438 aa).

Residues 4 to 32 (TKFELYELKPFIIDAVHRLGFYEPTDIQK) carry the Q motif motif. Positions 35-208 (IPAVLKKESV…KKYMENPKYA (174 aa)) constitute a Helicase ATP-binding domain. Position 48–55 (48–55 (SQTGTGKT)) interacts with ATP. Positions 156-159 (DEAD) match the DEAD box motif. A Helicase C-terminal domain is found at 235 to 385 (LLFDIMSHLN…EWKKGDDRQR (151 aa)). A disordered region spans residues 380–438 (GDDRQRRKKRKKTPNEADEIAHRLVKKPKKVKPGYKKKMSYEMEKIKKKQRRNQSKKRK). Residues 392–401 (TPNEADEIAH) show a composition bias toward basic and acidic residues. Basic residues-rich tracts occupy residues 402-417 (RLVKKPKKVKPGYKKK) and 425-438 (IKKKQRRNQSKKRK).

The protein belongs to the DEAD box helicase family. As to quaternary structure, interacts with CspB when cells are transcriptionally active. May interact with RNA helicases CshA and DbpA (DeaD), may be a component of a possible RNA degradosome complex composed of rny, rnja, rnjb, pnp, pfkA and eno (although rnjA and rnjB's presence is unclear). Specifically interacts with pnp and rny.

It localises to the cytoplasm. Its subcellular location is the nucleoid. The enzyme catalyses ATP + H2O = ADP + phosphate + H(+). In terms of biological role, DEAD-box RNA helicase that plays a role in 70S ribosome assembly. May work in conjunction with the cold shock proteins to ensure proper initiation of transcription at low and optimal temperatures. This chain is DEAD-box ATP-dependent RNA helicase CshB, found in Bacillus subtilis (strain 168).